The primary structure comprises 378 residues: Alginate lyase (378 aa).

A signal peptide spans Met1–Ala28. Substrate is bound by residues Ser67–Lys68, His140–Thr141, and Tyr258.

This sequence belongs to the polysaccharide lyase 5 family.

Its subcellular location is the periplasm. The catalysed reaction is Eliminative cleavage of alginate to give oligosaccharides with 4-deoxy-alpha-L-erythro-hex-4-enuronosyl groups at their non-reducing ends and beta-D-mannuronate at their reducing end.. Its function is as follows. Catalyzes the depolymerization of alginate by cleaving the beta-1,4 glycosidic bond between two adjacent sugar residues via a beta-elimination mechanism. May serve to degrade mislocalized alginate that is trapped in the periplasmic space. This is Alginate lyase from Pseudomonas syringae pv. tomato (strain ATCC BAA-871 / DC3000).